A 437-amino-acid polypeptide reads, in one-letter code: Na(+)/H(+) antiporter NhaA (437 aa).

11 helical membrane passes run 12–32 (SMNITASILLFVTAIAAAVIA), 65–85 (LTMIEFINDGLMTIFFLMVGL), 103–123 (ALPFIAACGGMVVPVVIYSMV), 133–153 (GLAIPMATDIAFSLGVLSLLG), 162–182 (IFLTAFAVVDDIGGILVIAIF), 186–206 (HVAYEYLLWAALLYVLLYFIG), 214–234 (IFFLVVGVVIWYLFLQSGIHS), 308–328 (GAVNYLVLPLFAFVNAGVMFS), 333–353 (VIGGVTLAVALGLLAGKFLGI), 377–397 (ISGVALLGGIGFTVSLFIANL), and 412–432 (LGVLSGTVMAGILGYLVLHWV).

It belongs to the NhaA Na(+)/H(+) (TC 2.A.33) antiporter family.

It is found in the cell inner membrane. It carries out the reaction Na(+)(in) + 2 H(+)(out) = Na(+)(out) + 2 H(+)(in). In terms of biological role, na(+)/H(+) antiporter that extrudes sodium in exchange for external protons. This Bacteroides fragilis (strain ATCC 25285 / DSM 2151 / CCUG 4856 / JCM 11019 / LMG 10263 / NCTC 9343 / Onslow / VPI 2553 / EN-2) protein is Na(+)/H(+) antiporter NhaA.